Here is a 318-residue protein sequence, read N- to C-terminus: Putative olfactory receptor 2W6 (318 aa).

At 1-31 (MGFYHVGQAAFELLTSSFILVGFSDRPHLEL) the chain is on the extracellular side. Residues 32–52 (IVFVVVLIFYLLTLLGNMTIV) form a helical membrane-spanning segment. The Cytoplasmic portion of the chain corresponds to 53–63 (LLSALDSRLHT). A helical membrane pass occupies residues 64–84 (PMYFFLANLSFLDMCFTTGSI). Residues 85–103 (PQMLYNLWGPDKTISYVGC) lie on the Extracellular side of the membrane. Cysteine 103 and cysteine 185 are disulfide-bonded. The chain crosses the membrane as a helical span at residues 104–124 (AIQLYFVLALGGVECVLLAVM). Residues 125–145 (AYDRYAAVCKPLHYTIIMHPR) are Cytoplasmic-facing. Residues 146 to 166 (LCGQLASVAWLSGFGNSLIMA) form a helical membrane-spanning segment. The Extracellular portion of the chain corresponds to 167–202 (PQTLMLPRCGHRRVDHFLCEMPALIGMACVDTMMLE). Residues 203-223 (ALAFALAIFIILAPLILILIS) traverse the membrane as a helical segment. At 224 to 245 (YGYVGGTVLRIKSAAGRKKAFN) the chain is on the cytoplasmic side. Residues 246-266 (TCSSHLIVVSLFYGTIIYMYL) form a helical membrane-spanning segment. Residues 267-277 (QPANTYSQDQG) lie on the Extracellular side of the membrane. The helical transmembrane segment at 278–298 (KFLTLFYTIVTPSVNPLIYTL) threads the bilayer. At 299 to 318 (RNKDVKEAMKKVLGKGSAEI) the chain is on the cytoplasmic side.

Belongs to the G-protein coupled receptor 1 family.

It is found in the cell membrane. In terms of biological role, odorant receptor. In Homo sapiens (Human), this protein is Putative olfactory receptor 2W6 (OR2W6P).